The primary structure comprises 534 residues: UDP-glucuronosyltransferase 1A3 (534 aa).

Residues 1–28 form the signal peptide; sequence MATGLQVPLPWLATGLLLLLSVQPWAES. N-linked (GlcNAc...) asparagine glycosylation is found at N119, N142, N296, and N348. A helical membrane pass occupies residues 492 to 508; sequence VIGFLLAVVLTVAFITF.

The protein belongs to the UDP-glycosyltransferase family. Homodimer. Homooligomer. Interacts with UGT1A1, UGT1A4, UGT1A6, UGT1A7, UGT1A8, UGT1A9 and UGT1A10 to form heterodimers. Isoform 1 interacts with isoform 2/i2 suggesting that oligomerization is involved in negative regulation of transferase activity by isoform 2. Isoform 1 also interacts with respective i2 isoforms of UGT1A1, UGT1A4, UGT1A6, UGT1A7, UGT1A8, UGT1A9 and UGT1A10. As to expression, expressed in liver, kidney, colon, esophagus and small intestine. Expressed in liver, kidney and colon. Not expressed in esophagus and small intestine.

It localises to the endoplasmic reticulum membrane. The enzyme catalyses glucuronate acceptor + UDP-alpha-D-glucuronate = acceptor beta-D-glucuronoside + UDP + H(+). It carries out the reaction 17beta-estradiol + UDP-alpha-D-glucuronate = 17beta-estradiol 3-O-(beta-D-glucuronate) + UDP + H(+). It catalyses the reaction 17beta-estradiol + UDP-alpha-D-glucuronate = 17beta-estradiol 17-O-(beta-D-glucuronate) + UDP + H(+). The catalysed reaction is 17alpha-estradiol + UDP-alpha-D-glucuronate = 17alpha-estradiol 3-O-(beta-D-glucuronate) + UDP + H(+). The enzyme catalyses estrone + UDP-alpha-D-glucuronate = estrone 3-O-(beta-D-glucuronate) + UDP + H(+). It carries out the reaction chenodeoxycholate + UDP-alpha-D-glucuronate = chenodeoxycholoyl-24-O-(beta-D-glucuronate) + UDP. It catalyses the reaction deoxycholate + UDP-alpha-D-glucuronate = deoxycholoyl-24-O-(beta-D-glucuronate) + UDP. The catalysed reaction is lithocholate + UDP-alpha-D-glucuronate = lithocholoyl-24-O-(beta-D-glucuronate) + UDP. The enzyme catalyses hyodeoxycholate + UDP-alpha-D-glucuronate = hyodeoxycholoyl-24-O-(beta-D-glucuronate) + UDP. It carries out the reaction hyocholate + UDP-alpha-D-glucuronate = hyocholoyl-24-O-(beta-D-glucuronate) + UDP. It catalyses the reaction calcidiol + UDP-alpha-D-glucuronate = calcidiol 25-O-(beta-D-glucuronide) + UDP + H(+). The catalysed reaction is (E)-ferulate + UDP-alpha-D-glucuronate = (E)-4-O-(beta-D-glucuronosyl)-ferulate + UDP + H(+). The enzyme catalyses (E)-ferulate + UDP-alpha-D-glucuronate = (E)-ferulic acid beta-D-glucuronate ester + UDP. It carries out the reaction losartan + UDP-alpha-D-glucuronate = losartan-2-N-beta-D-glucuronide + UDP. It catalyses the reaction candesartan + UDP-alpha-D-glucuronate = candesartan-2-N-beta-D-glucuronide + UDP. The catalysed reaction is zolasartan + UDP-alpha-D-glucuronate = zolarsartan-2-N-beta-D-glucuronide + UDP. UDP-glucuronosyltransferase (UGT) that catalyzes phase II biotransformation reactions in which lipophilic substrates are conjugated with glucuronic acid to increase the metabolite's water solubility, thereby facilitating excretion into either the urine or bile. Essential for the elimination and detoxification of drugs, xenobiotics and endogenous compounds. Catalyzes the glucuronidation of endogenous estrogen hormones such as estradiol and estrone. Contributes to bile acid (BA) detoxification by catalyzing the glucuronidation of BA substrates, which are natural detergents for dietary lipids absorption. Involved in the glucuronidation of calcidiol, which is the major circulating form of vitamin D3, essential for the regulation of calcium and phosphate homeostasis. Involved in the glucuronidation of the phytochemical ferulic acid at the phenolic or the carboxylic acid group. Involved in the glucuronidation of the AGTR1 angiotensin receptor antagonists losartan, candesartan and zolarsartan, which can inhibit the effect of angiotensin II. In terms of biological role, lacks UDP-glucuronosyltransferase (UGT) activity but acts as a negative regulator of isoform 1. The chain is UDP-glucuronosyltransferase 1A3 from Homo sapiens (Human).